The chain runs to 222 residues: Charged multivesicular body protein 2a (222 aa).

Met1 is modified (N-acetylmethionine). Positions 12–53 (EELLRQNQRALNRAMRELDRERQKLETQEKKIIADIKKMAKQ) form a coiled coil. The interaction with VPS4B stretch occupies residues 56-222 (MDAVRIMAKD…EERLKNLRRD (167 aa)). Polar residues predominate over residues 179 to 188 (LSNLPSTGGS). The tract at residues 179-198 (LSNLPSTGGSLSVAAGGKKA) is disordered. Ser184 carries the post-translational modification Phosphoserine. Thr185 carries the phosphothreonine modification. Phosphoserine is present on residues Ser188, Ser190, and Ser203. The stretch at 195–222 (GKKAEATASALADADADLEERLKNLRRD) forms a coiled coil. The MIT-interacting motif signature appears at 210 to 220 (ADLEERLKNLR). The interval 217–222 (KNLRRD) is interaction with VTA1.

This sequence belongs to the SNF7 family. In terms of assembly, probable core component of the endosomal sorting required for transport complex III (ESCRT-III). ESCRT-III components are thought to multimerize to form a flat lattice on the perimeter membrane of the endosome. Several assembly forms of ESCRT-III may exist that interact and act sequentially. In vitro, heteromerizes with CHMP3 (but not CHMP4) to form helical tubular structures that expose membrane-interacting sites on the outside whereas VPS4B can associate on the inside of the tubule. Interacts with CHMP1B, CHMP2B, CHMP3, CHMP4A, CHMP4B, CHMP4C and CHMP5. Interacts with VPS4A; the interaction is direct. Interacts with VPS4B; the interaction is direct. Interacts with MITD1. Interacts with VTA1; the interaction probably involves the open conformation of CHMP2A. ISGylated in a CHMP5-dependent manner. Isgylation weakens and inhibits its interactions with VPS4A and VTA1 respectively. As to expression, widely expressed. Highly expressed in brain, heart, liver and kidney.

The protein resides in the late endosome membrane. Its subcellular location is the cytoplasm. It is found in the nucleus envelope. In terms of biological role, probable core component of the endosomal sorting required for transport complex III (ESCRT-III) which is involved in multivesicular bodies (MVBs) formation and sorting of endosomal cargo proteins into MVBs. MVBs contain intraluminal vesicles (ILVs) that are generated by invagination and scission from the limiting membrane of the endosome and mostly are delivered to lysosomes enabling degradation of membrane proteins, such as stimulated growth factor receptors, lysosomal enzymes and lipids. The MVB pathway appears to require the sequential function of ESCRT-O, -I,-II and -III complexes. ESCRT-III proteins mostly dissociate from the invaginating membrane before the ILV is released. The ESCRT machinery also functions in topologically equivalent membrane fission events, such as the terminal stages of cytokinesis. Together with SPAST, the ESCRT-III complex promotes nuclear envelope sealing and mitotic spindle disassembly during late anaphase. Recruited to the reforming nuclear envelope (NE) during anaphase by LEMD2. ESCRT-III proteins are believed to mediate the necessary vesicle extrusion and/or membrane fission activities, possibly in conjunction with the AAA ATPase VPS4. This Mus musculus (Mouse) protein is Charged multivesicular body protein 2a (Chmp2a).